Reading from the N-terminus, the 214-residue chain is Adenylate kinase (214 aa).

ATP is bound at residue 10–15 (GAGKGT). An NMP region spans residues 30–59 (STGDMFRAAIKAGTELGKQAKALMDEGKLV). AMP-binding positions include threonine 31, arginine 36, 57–59 (KLV), 85–88 (GFPR), and glutamine 92. Positions 122–159 (GRRVHQASGRSYHIVYNPPKVEGKDDVTGEDLIIRADD) are LID. Residues arginine 123 and 132–133 (SY) each bind ATP. Residues arginine 156 and arginine 167 each coordinate AMP. An ATP-binding site is contributed by glutamine 200.

The protein belongs to the adenylate kinase family. Monomer.

It is found in the cytoplasm. It catalyses the reaction AMP + ATP = 2 ADP. It functions in the pathway purine metabolism; AMP biosynthesis via salvage pathway; AMP from ADP: step 1/1. In terms of biological role, catalyzes the reversible transfer of the terminal phosphate group between ATP and AMP. Plays an important role in cellular energy homeostasis and in adenine nucleotide metabolism. It may be linked to the biosynthesis of lipopolysaccharide surface molecules, which are important for the pathogenesis of H.influenzae. In Haemophilus influenzae (strain ATCC 51907 / DSM 11121 / KW20 / Rd), this protein is Adenylate kinase.